The chain runs to 145 residues: Large ribosomal subunit protein uL14m (145 aa).

The transit peptide at 1–30 directs the protein to the mitochondrion; sequence MAFFTGLWGPFTCVSRVLSHHCFSTTGSLS.

Belongs to the universal ribosomal protein uL14 family. As to quaternary structure, component of the mitochondrial large ribosomal subunit (mt-LSU). Mature mammalian 55S mitochondrial ribosomes consist of a small (28S) and a large (39S) subunit. The 28S small subunit contains a 12S ribosomal RNA (12S mt-rRNA) and 30 different proteins. The 39S large subunit contains a 16S rRNA (16S mt-rRNA), a copy of mitochondrial valine transfer RNA (mt-tRNA(Val)), which plays an integral structural role, and 52 different proteins. Interacts with MALSU1.

Its subcellular location is the mitochondrion. In terms of biological role, forms part of 2 intersubunit bridges in the assembled ribosome. Upon binding to MALSU1 intersubunit bridge formation is blocked, preventing ribosome formation and repressing translation. This Homo sapiens (Human) protein is Large ribosomal subunit protein uL14m (MRPL14).